Consider the following 227-residue polypeptide: MEPAAEKREAEQEELQQQHDEPAVPSADDDEAEAEENERRNRELKAGFHPLRRRFVLWYTRRTPGARSQSYEDNIKKIVDFSTVESFWVCYCHLTRPVSLPSPTDLHLFKEGIRPLWEDPANRSGGKWIIRFKKTVSGRFWEDLVLVLVGDQLDYSDDVCGVVLSVRFNEDILSVWNRNASDHQAVMTLRDSIKRHLKLPHSYLMEYKPHDASLRDNSSYRNTWLRG.

Basic and acidic residues predominate over residues 1–22; sequence MEPAAEKREAEQEELQQQHDEP. The tract at residues 1–43 is disordered; the sequence is MEPAAEKREAEQEELQQQHDEPAVPSADDDEAEAEENERRNRE. A compositionally biased stretch (acidic residues) spans 27–36; the sequence is ADDDEAEAEE.

The protein belongs to the eukaryotic initiation factor 4E family. As to quaternary structure, EIF4F is a multi-subunit complex, the composition of which varies with external and internal environmental conditions. It is composed of at least EIF4A, EIF4E and EIF4G. EIF4E is also known to interact with other partners. In higher plants two isoforms of EIF4F have been identified, named isoform EIF4F and isoform EIF(iso)4F. Isoform EIF4F has subunits p220 and p26, whereas isoform EIF(iso)4F has subunits p82 and p28.

Its function is as follows. Recognizes and binds the 7-methylguanosine-containing mRNA cap during an early step in the initiation of protein synthesis and facilitates ribosome binding by inducing the unwinding of the mRNAs secondary structures. In Oryza sativa subsp. japonica (Rice), this protein is Eukaryotic translation initiation factor NCBP (NCBP).